The chain runs to 763 residues: Forkhead box protein M1 (763 aa).

Residues 1-53 are disordered; the sequence is MKTSPRRPLILKRRRLPLPVQNAPSETSEEEPKRSPAQQESNQAEASKEVAES. The segment covering 36 to 45 has biased composition (polar residues); that stretch reads PAQQESNQAE. Residues lysine 163, lysine 201, and lysine 325 each participate in a glycyl lysine isopeptide (Lys-Gly) (interchain with G-Cter in SUMO2) cross-link. The interval 198 to 232 is disordered; the sequence is RSIKQEMEEKENCHLEQRQVKVEEPSRPSASWQNS. The span at 200 to 223 shows a compositional bias: basic and acidic residues; it reads IKQEMEEKENCHLEQRQVKVEEPS. A DNA-binding region (fork-head) is located at residues 235–327; the sequence is ERPPYSYMAM…LTLDQVFKPL (93 aa). The interval 329 to 351 is disordered; it reads PGSPQLPEHLESQQKRPNPELRR. At serine 331 the chain carries Phosphoserine. The span at 336–351 shows a compositional bias: basic and acidic residues; that stretch reads EHLESQQKRPNPELRR. A Glycyl lysine isopeptide (Lys-Gly) (interchain with G-Cter in SUMO2) cross-link involves residue lysine 356. Residue serine 376 is modified to Phosphoserine; by CHEK2. Glycyl lysine isopeptide (Lys-Gly) (interchain with G-Cter in SUMO2) cross-links involve residues lysine 422 and lysine 440. Residues 482-711 are disordered; the sequence is PPLEEWPSPA…PGSPEPQVSG (230 aa). Serine 489 is subject to Phosphoserine; by GSK3. Positions 494–503 are enriched in basic and acidic residues; it reads FKEESSHSWE. The residue at position 522 (serine 522) is a Phosphoserine. Positions 583-592 are enriched in polar residues; it reads DPASQLSYSQ. Threonine 611 bears the Phosphothreonine; by CDK1 mark. Phosphothreonine occurs at positions 620, 627, and 662. Serine 693 bears the Phosphoserine; by CDK1 mark. 2 positions are modified to phosphoserine; by PLK1: serine 730 and serine 739.

As to quaternary structure, interacts with PINT87aa which is encoded by the circular form of the long non-coding RNA LINC-PINT; the interaction inhibits FOXM1-mediated transcription of PHB2. Post-translationally, phosphorylated in M (mitotic) phase. Phosphorylation by the checkpoint kinase CHEK2 in response to DNA damage increases the FOXM1 protein stability probably stimulating the transcription of genes involved in DNA repair. Phosphorylated by CDK1 in late S and G2 phases, creating docking sites for the POLO box domains of PLK1. Subsequently, PLK1 binds and phosphorylates FOXM1, leading to activation of transcriptional activity and subsequent enhanced expression of key mitotic regulators. Phosphorylated by GSK3B leading to ubiquitination and proteasomal degradation. In terms of processing, ubiquitinated in a FBXW7-dependent manner leading to proteasomal degradation. As to expression, expressed in thymus, testis, small intestine, colon followed by ovary. Appears to be expressed only in adult organs containing proliferating/cycling cells or in response to growth factors. Also expressed in epithelial cell lines derived from tumors. Not expressed in resting cells. Isoform 2 is highly expressed in testis.

Its subcellular location is the nucleus. Functionally, transcription factor regulating the expression of cell cycle genes essential for DNA replication and mitosis. Plays a role in the control of cell proliferation. Also plays a role in DNA break repair, participating in the DNA damage checkpoint response. Promotes transcription of PHB2. The protein is Forkhead box protein M1 (FOXM1) of Homo sapiens (Human).